Here is a 410-residue protein sequence, read N- to C-terminus: 2-oxoisovalerate dehydrogenase subunit alpha (410 aa).

It belongs to the BCKDHA family. In terms of assembly, heterodimer of an alpha and a beta chain. The cofactor is thiamine diphosphate.

The enzyme catalyses N(6)-[(R)-lipoyl]-L-lysyl-[protein] + 3-methyl-2-oxobutanoate + H(+) = N(6)-[(R)-S(8)-2-methylpropanoyldihydrolipoyl]-L-lysyl-[protein] + CO2. In terms of biological role, the branched-chain alpha-keto dehydrogenase complex catalyzes the overall conversion of alpha-keto acids to acyl-CoA and CO(2). It contains multiple copies of three enzymatic components: branched-chain alpha-keto acid decarboxylase (E1), lipoamide acyltransferase (E2) and lipoamide dehydrogenase (E3). This Pseudomonas putida (Arthrobacter siderocapsulatus) protein is 2-oxoisovalerate dehydrogenase subunit alpha (bkdA1).